Here is a 601-residue protein sequence, read N- to C-terminus: Sulfite reductase [NADPH] flavoprotein alpha-component (601 aa).

The region spanning Ile-64–Val-202 is the Flavodoxin-like domain. FMN contacts are provided by residues Ser-70 to Ala-75, Ser-117 to Gly-120, and Leu-153 to Cys-162. In terms of domain architecture, FAD-binding FR-type spans Glu-236–Pro-450. Residues Thr-324, Ala-358, Arg-388–Ser-391, Thr-406–Gly-408, and Gly-421–Ser-424 each bind FAD. NADP(+)-binding positions include Ser-521 to Arg-522, Lys-527 to Gln-531, and Asp-563. Position 601 (Tyr-601) interacts with FAD.

The protein belongs to the NADPH-dependent sulphite reductase flavoprotein subunit CysJ family. In the N-terminal section; belongs to the flavodoxin family. This sequence in the C-terminal section; belongs to the flavoprotein pyridine nucleotide cytochrome reductase family. In terms of assembly, alpha(8)-beta(8). The alpha component is a flavoprotein, the beta component is a hemoprotein. It depends on FAD as a cofactor. Requires FMN as cofactor.

It carries out the reaction hydrogen sulfide + 3 NADP(+) + 3 H2O = sulfite + 3 NADPH + 4 H(+). It participates in sulfur metabolism; hydrogen sulfide biosynthesis; hydrogen sulfide from sulfite (NADPH route): step 1/1. Component of the sulfite reductase complex that catalyzes the 6-electron reduction of sulfite to sulfide. This is one of several activities required for the biosynthesis of L-cysteine from sulfate. The flavoprotein component catalyzes the electron flow from NADPH -&gt; FAD -&gt; FMN to the hemoprotein component. This chain is Sulfite reductase [NADPH] flavoprotein alpha-component, found in Enterobacter sp. (strain 638).